We begin with the raw amino-acid sequence, 122 residues long: Large ribosomal subunit protein uL14c (122 aa).

The protein belongs to the universal ribosomal protein uL14 family. In terms of assembly, part of the 50S ribosomal subunit.

Its subcellular location is the plastid. The protein localises to the chloroplast. Its function is as follows. Binds to 23S rRNA. In Phaseolus vulgaris (Kidney bean), this protein is Large ribosomal subunit protein uL14c.